A 160-amino-acid polypeptide reads, in one-letter code: Cytochrome c-type biogenesis protein CcmE (160 aa).

The Cytoplasmic portion of the chain corresponds to 1-8; the sequence is MSAPRKTR. A helical; Signal-anchor for type II membrane protein membrane pass occupies residues 9–29; sequence LYAILAVVCGAVLTIALMLYA. At 30–160 the chain is on the periplasmic side; that stretch reads LSSNIDLFYT…PAAGPEGKRL (131 aa). Heme-binding residues include histidine 130 and tyrosine 134.

It belongs to the CcmE/CycJ family.

The protein resides in the cell inner membrane. Its function is as follows. Heme chaperone required for the biogenesis of c-type cytochromes. Transiently binds heme delivered by CcmC and transfers the heme to apo-cytochromes in a process facilitated by CcmF and CcmH. The chain is Cytochrome c-type biogenesis protein CcmE from Pectobacterium atrosepticum (strain SCRI 1043 / ATCC BAA-672) (Erwinia carotovora subsp. atroseptica).